The primary structure comprises 90 residues: Accessory gland-specific peptide 26Ab (90 aa).

The N-terminal stretch at 1–21 (MNYFAVLCIFSCICLWQFSDA) is a signal peptide.

In terms of tissue distribution, main cells of the accessory glands of males.

The protein resides in the secreted. It localises to the extracellular space. This protein is transferred from male to female during mating and may affect egglaying and behavior after mating. The sequence is that of Accessory gland-specific peptide 26Ab (Acp26Ab) from Drosophila sechellia (Fruit fly).